Reading from the N-terminus, the 197-residue chain is Imidazoleglycerol-phosphate dehydratase (197 aa).

It belongs to the imidazoleglycerol-phosphate dehydratase family.

It localises to the cytoplasm. It carries out the reaction D-erythro-1-(imidazol-4-yl)glycerol 3-phosphate = 3-(imidazol-4-yl)-2-oxopropyl phosphate + H2O. Its pathway is amino-acid biosynthesis; L-histidine biosynthesis; L-histidine from 5-phospho-alpha-D-ribose 1-diphosphate: step 6/9. The sequence is that of Imidazoleglycerol-phosphate dehydratase from Pseudomonas fluorescens (strain ATCC BAA-477 / NRRL B-23932 / Pf-5).